A 968-amino-acid chain; its full sequence is MSSAAKNFYQVVKSAPKGRFKGIKRDYTVEDVLKLRGSIDIDYTLATRGANKLWQLLHTEPFVPALGAQTGNQAVQMVRAGLKAIYLSGWQVAADANSAGDMYPDQSLYPANSGPELAKRINRSLRRADQIEACEAEDYLAQRDWYAPIVADAEAGFGGALNCFELMKAYIEAGAAGVHYEDQLGSEKKCGHMGGKVLIPTAQHIRHLNASRLAADVCGVPTIIVARTDAESSRLLTSDIDPRDHPYIDYEAGRTIEGFYRLKDSTAIQYCIDRAIQYAPYTDLIWMETSHPTIADAREFAEGVHKQYPDKMFAYNCSPSFNWKKHLSPSQMEKFQKELGAMGFKYQFITLAGYHANSYSMFDLARNYKEKGMLAYSGLQEGEFAAEKHGYTAVKHQREVGTGYFDAVSRAVTGGLSSTTALSGSTEEAQFQTAVASQDEEILSLTAQNVAGDEKILTPDALRFLHDLNTEFNPRRLRLLSKRNQVQADINNSLWFPDFNKETEVLRSDQGWKGAEIPRDLQDRRVEITGPTDRKMVINAMNSGANVFMADFEDSNSPTWRNQLEGQINLYDAVRNNISYTHPTTKKEYTLNEKHAVLKVRPRGWHLPEKHVLIHNQPTSGSLFDFGLFVFHNAKALIAQGSGPYFYLPKLQSAEEAQLWADVFKYTEDKLGLARGTIKCTVLIEHLLASFQLHEIIHALKDNIVGLNCGRWDYIFSYIKTFQNHRKFLLPDRFQIGMTAPFMRNYSLEVIKACHLRGIHAMGGMAAQIPIKHDQVANDKAFALVRADKEREATDGHDGTWVAHPGLVPLAKRVFDQMMPKPNQISKNLTRANCTKEDLTVIPEGTRTEAGFRHNISVTLGYLDSWLRGTGCVPLYNLMEDAATAEISRAQLWQWLHHDAKLEDGRTIDAGLVKQTIAAETERRLIRAGSVVNRIPEAADLLEKFVTEEKMSDFLTTDAYDRLVSEGY.

The interval 1 to 443 (MSSAAKNFYQ…AVASQDEEIL (443 aa)) is isocitrate lyase. The interval 444–968 (SLTAQNVAGD…AYDRLVSEGY (525 aa)) is malate synthase. The Proton acceptor role is filled by arginine 601. Aspartate 881 functions as the Proton donor in the catalytic mechanism.

In the N-terminal section; belongs to the isocitrate lyase/PEP mutase superfamily. Isocitrate lyase family. It in the C-terminal section; belongs to the malate synthase family. In terms of tissue distribution, intestinal and body wall muscle cells.

It catalyses the reaction D-threo-isocitrate = glyoxylate + succinate. The enzyme catalyses glyoxylate + acetyl-CoA + H2O = (S)-malate + CoA + H(+). Its pathway is carbohydrate metabolism; glyoxylate cycle; (S)-malate from isocitrate: step 1/2. The protein operates within carbohydrate metabolism; glyoxylate cycle; (S)-malate from isocitrate: step 2/2. The chain is Bifunctional glyoxylate cycle protein (icl-1) from Caenorhabditis elegans.